Reading from the N-terminus, the 1101-residue chain is Furin-like protease 1, isoform 1-CRR (1101 aa).

Positions 1-57 are disordered; the sequence is MKNDVVRWSRQPTSNTTNSSSSSRSDSNSTHKHRSKSNKLNARQLGSNAARSCQQRS. Positions 13–28 are enriched in low complexity; the sequence is TSNTTNSSSSSRSDSN. N-linked (GlcNAc...) asparagine glycosylation is found at Asn-15, Asn-18, and Asn-28. Residues 38 to 57 are compositionally biased toward polar residues; the sequence is NKLNARQLGSNAARSCQQRS. Asn-108 carries an N-linked (GlcNAc...) asparagine glycan. Residues 119 to 139 traverse the membrane as a helical segment; it reads VFLLALQFSAVVFLCNINVGF. Positions 150 to 163 are enriched in low complexity; sequence SAGGSSPAAPSSAP. Positions 150-187 are disordered; it reads SAGGSSPAAPSSAPSSPPTVAVPPPPPPSSALKVDPNG. Residues 164-178 are compositionally biased toward pro residues; the sequence is SSPPTVAVPPPPPPS. Residue Asn-333 is glycosylated (N-linked (GlcNAc...) asparagine). Residues 340-654 form the Peptidase S8 domain; the sequence is MWYLNRGGGL…YGLMDAAEMV (315 aa). Active-site charge relay system residues include Asp-372 and His-413. Asn-426 carries an N-linked (GlcNAc...) asparagine glycan. 2 disulfide bridges follow: Cys-430-Cys-579 and Cys-522-Cys-552. Ser-587 acts as the Charge relay system in catalysis. Asn-606 is a glycosylation site (N-linked (GlcNAc...) asparagine). Positions 662-791 constitute a P/Homo B domain; it reads AVPEQQRCEI…DMIFYGTETP (130 aa). A disulfide bridge links Cys-669 with Cys-695. Residues Asn-727 and Asn-859 are each glycosylated (N-linked (GlcNAc...) asparagine). The disordered stretch occupies residues 886-915; that stretch reads EEDEQDDEVTRGPVNPYSSSPMDHSLLMSN. The segment covering 901-915 has biased composition (polar residues); sequence PYSSSPMDHSLLMSN. The N-linked (GlcNAc...) asparagine glycan is linked to Asn-978. Residues 1014–1034 traverse the membrane as a helical segment; that stretch reads TVLLLVSVIFTLMGVAVAGGI.

Belongs to the peptidase S8 family. Furin subfamily. It depends on Ca(2+) as a cofactor. In adults, isoform 1-CRR is expressed in CNS, fat body, and female reproductive tissues, and in embryos, in anal pads, hindgut, developing antennomaxillary complex, oenocytes, clipeolabrum, pharynx, trachea, CNS and developing posterior spiracles.

It localises to the golgi apparatus membrane. The enzyme catalyses Release of mature proteins from their proproteins by cleavage of -Arg-Xaa-Yaa-Arg-|-Zaa- bonds, where Xaa can be any amino acid and Yaa is Arg or Lys. Releases albumin, complement component C3 and von Willebrand factor from their respective precursors.. Its function is as follows. Furin is likely to represent the ubiquitous endoprotease activity within constitutive secretory pathways and capable of cleavage at the RX(K/R)R consensus motif. The sequence is that of Furin-like protease 1, isoform 1-CRR (Fur1) from Drosophila melanogaster (Fruit fly).